Here is a 61-residue protein sequence, read N- to C-terminus: Weak toxin CM-1c (61 aa).

4 cysteine pairs are disulfide-bonded: Cys3–Cys21, Cys14–Cys37, Cys41–Cys53, and Cys54–Cys59.

Belongs to the three-finger toxin family. Short-chain subfamily. Orphan group VI sub-subfamily. In terms of tissue distribution, expressed by the venom gland.

It localises to the secreted. In Hemachatus haemachatus (Rinkhals), this protein is Weak toxin CM-1c.